The sequence spans 155 residues: Putative pre-16S rRNA nuclease (155 aa).

The protein belongs to the YqgF nuclease family.

The protein localises to the cytoplasm. Its function is as follows. Could be a nuclease involved in processing of the 5'-end of pre-16S rRNA. The protein is Putative pre-16S rRNA nuclease of Xanthomonas axonopodis pv. citri (strain 306).